The following is a 186-amino-acid chain: MVLSEELYTQKEAMLYSQRIAQLSKALWKAVEKDWQQWIKPYDLNINEHHILWISYHLKGASISDVAKFGVMHVSTAFNFSKKLEERGFLKFSKRDDDKRNTYVELTEAGTELIVEMNKNYHNTYHSVLEGSLALKDLYGRFPDFLDVMAVIRNIYGEDFIDIFERSFQHFRDSFDTLEERPTVKG.

The HTH marR-type domain occupies 13–157; that stretch reads AMLYSQRIAQ…VMAVIRNIYG (145 aa). The segment at residues 63–86 is a DNA-binding region (H-T-H motif); sequence ISDVAKFGVMHVSTAFNFSKKLEE.

As to quaternary structure, homodimer.

Negative regulator of protease production and sporulation. The polypeptide is HTH-type transcriptional regulator Hpr (Lysinibacillus sphaericus (strain C3-41)).